A 111-amino-acid chain; its full sequence is Cytochrome bo(3) ubiquinol oxidase subunit 4 (111 aa).

Residues 1–17 (MSSAAHDNHGAGHGSLG) lie on the Cytoplasmic side of the membrane. The helical transmembrane segment at 18-38 (SYAIGFVLSVILTAIPFYMVM) threads the bilayer. The Periplasmic segment spans residues 39–46 (DGGFSRHA). The chain crosses the membrane as a helical span at residues 47–67 (TILTMVVLGLVQVVVHLICFL). Residues 68–80 (HMNMSSEGRWNVM) lie on the Cytoplasmic side of the membrane. Residues 81 to 101 (AFIFTVIVILLVVGLSLWIIF) form a helical membrane-spanning segment. At 102–111 (SADMLMMPMP) the chain is on the periplasmic side.

It belongs to the cytochrome c oxidase bacterial subunit 4 family. Heterooctamer of two A chains, two B chains, two C chains and two D chains.

It is found in the cell inner membrane. Its function is as follows. Cytochrome bo(3) ubiquinol terminal oxidase is the component of the aerobic respiratory chain of E.coli that predominates when cells are grown at high aeration. Has proton pump activity across the membrane in addition to electron transfer, pumping 2 protons/electron. This is Cytochrome bo(3) ubiquinol oxidase subunit 4 (cyoD) from Pseudomonas aeruginosa (strain ATCC 15692 / DSM 22644 / CIP 104116 / JCM 14847 / LMG 12228 / 1C / PRS 101 / PAO1).